A 306-amino-acid polypeptide reads, in one-letter code: GTPase Era (306 aa).

The 169-residue stretch at 13–181 (YCGFIAIVGR…EKIVRESLHE (169 aa)) folds into the Era-type G domain. Positions 21–28 (GRPNVGKS) are G1. 21–28 (GRPNVGKS) lines the GTP pocket. Positions 47 to 51 (QTTRH) are G2. Residues 68-71 (DTPG) are G3. GTP-binding positions include 68-72 (DTPGL) and 130-133 (NKID). Residues 130-133 (NKID) form a G4 region. The G5 stretch occupies residues 160-162 (ISA). In terms of domain architecture, KH type-2 spans 212 to 289 (TGDELPYSVT…HLELWVKVKS (78 aa)).

It belongs to the TRAFAC class TrmE-Era-EngA-EngB-Septin-like GTPase superfamily. Era GTPase family. As to quaternary structure, monomer.

It localises to the cytoplasm. Its subcellular location is the cell inner membrane. Functionally, an essential GTPase that binds both GDP and GTP, with rapid nucleotide exchange. Plays a role in 16S rRNA processing and 30S ribosomal subunit biogenesis and possibly also in cell cycle regulation and energy metabolism. The polypeptide is GTPase Era (Pasteurella multocida (strain Pm70)).